Here is a 201-residue protein sequence, read N- to C-terminus: Large ribosomal subunit protein uL4 (201 aa).

A disordered region spans residues 44 to 68 (KAQKTRSEVAGTTKKSKKQKGGGAR).

It belongs to the universal ribosomal protein uL4 family. In terms of assembly, part of the 50S ribosomal subunit.

In terms of biological role, one of the primary rRNA binding proteins, this protein initially binds near the 5'-end of the 23S rRNA. It is important during the early stages of 50S assembly. It makes multiple contacts with different domains of the 23S rRNA in the assembled 50S subunit and ribosome. Forms part of the polypeptide exit tunnel. This is Large ribosomal subunit protein uL4 from Xanthomonas axonopodis pv. citri (strain 306).